Reading from the N-terminus, the 134-residue chain is Interleukin-4 (134 aa).

The signal sequence occupies residues 1 to 23 (MGLTYQLLPALVCLLACTSFIQG). 2 cysteine pairs are disulfide-bonded: C24-C133 and C48-C88. A glycan (N-linked (GlcNAc...) asparagine) is linked at N38. N101 carries N-linked (GlcNAc...) asparagine glycosylation.

It belongs to the IL-4/IL-13 family.

It localises to the secreted. Participates in at least several B-cell activation processes as well as of other cell types. It is a costimulator of DNA-synthesis. It induces the expression of class II MHC molecules on resting B-cells. It enhances both secretion and cell surface expression of IgE and IgG1. It also regulates the expression of the low affinity Fc receptor for IgE (CD23) on both lymphocytes and monocytes. Positively regulates IL31RA expression in macrophages. Stimulates autophagy in dendritic cells by interfering with mTORC1 signaling and through the induction of RUFY4. The sequence is that of Interleukin-4 (IL4) from Equus caballus (Horse).